Reading from the N-terminus, the 200-residue chain is Large ribosomal subunit protein uL4 (200 aa).

Residues arginine 43–aspartate 71 are disordered.

Belongs to the universal ribosomal protein uL4 family. As to quaternary structure, part of the 50S ribosomal subunit.

Its function is as follows. One of the primary rRNA binding proteins, this protein initially binds near the 5'-end of the 23S rRNA. It is important during the early stages of 50S assembly. It makes multiple contacts with different domains of the 23S rRNA in the assembled 50S subunit and ribosome. In terms of biological role, forms part of the polypeptide exit tunnel. The protein is Large ribosomal subunit protein uL4 of Histophilus somni (strain 2336) (Haemophilus somnus).